Here is an 81-residue protein sequence, read N- to C-terminus: Sulfur carrier protein TusA (81 aa).

Cysteine 19 serves as the catalytic Cysteine persulfide intermediate.

Belongs to the sulfur carrier protein TusA family.

The protein localises to the cytoplasm. Sulfur carrier protein which probably makes part of a sulfur-relay system. The protein is Sulfur carrier protein TusA of Aeromonas salmonicida (strain A449).